The chain runs to 309 residues: Glutaminase (309 aa).

The substrate site is built by Ser65, Asn117, Glu162, Asn169, Tyr193, Tyr245, and Val263.

Belongs to the glutaminase family. In terms of assembly, homotetramer.

The enzyme catalyses L-glutamine + H2O = L-glutamate + NH4(+). This is Glutaminase from Bacillus cytotoxicus (strain DSM 22905 / CIP 110041 / 391-98 / NVH 391-98).